The chain runs to 912 residues: Rho guanine nucleotide exchange factor 1 (912 aa).

Residues 41 to 232 (EQNSQFQSLE…GLYMRHLGVR (192 aa)) enclose the RGSL domain. Residues 248-413 (KVMGNRRSDE…PDTLHSLPKS (166 aa)) form a disordered region. Positions 283–313 (DFRHLKAEVDAEKPGATDRKGGVGMPSRDRN) are enriched in basic and acidic residues. A compositionally biased stretch (acidic residues) spans 365-381 (STDEGAETESPEPGDEG). Phosphoserine occurs at positions 374 and 409. Residues 416 to 605 (KRQEVISELL…REILHHVNQA (190 aa)) form the DH domain. In terms of domain architecture, PH spans 647 to 760 (KLVHEGPLTW…WCALITETAG (114 aa)). Phosphothreonine is present on T695. Y738 bears the Phosphotyrosine; by JAK2 mark. 2 disordered regions span residues 763–802 (KVPA…PADA) and 841–865 (AEED…LSPA). The segment covering 777–789 (PSSTREPLLSSSE) has biased composition (low complexity). S863 is modified (phosphoserine). A coiled-coil region spans residues 865-896 (ARTQEIQENLLSLEETMKQLEELEEEFCRLRP).

Interacts with RHOA, GNA12 and GNA13. Homooligomerizes through the coiled coil region. May interact with CCPG1. Interacts with CTNNAL1. Phosphorylated by PKCA. Angiotensin-2 induced Tyr-738 phosphorylation is mediated by JAK2. In terms of tissue distribution, ubiquitously expressed.

The protein localises to the cytoplasm. It is found in the membrane. Seems to play a role in the regulation of RhoA GTPase by guanine nucleotide-binding alpha-12 (GNA12) and alpha-13 (GNA13) subunits. Acts as a GTPase-activating protein (GAP) for GNA12 and GNA13, and as guanine nucleotide exchange factor (GEF) for RhoA GTPase. Activated G alpha 13/GNA13 stimulates the RhoGEF activity through interaction with the RGS-like domain. This GEF activity is inhibited by binding to activated GNA12. Mediates angiotensin-2-induced RhoA activation. In lymphoid follicles, may trigger activation of GNA13 as part of S1PR2-dependent signaling pathway that leads to inhibition of germinal center (GC) B cell growth and migration outside the GC niche. The polypeptide is Rho guanine nucleotide exchange factor 1 (ARHGEF1) (Homo sapiens (Human)).